We begin with the raw amino-acid sequence, 350 residues long: Inhibitor of nuclear factor kappa-B kinase-interacting protein (350 aa).

Positions 1–11 (MSEVKSRKKSG) are enriched in basic residues. The tract at residues 1-39 (MSEVKSRKKSGPKGAPAAEPGKRSEGGKTPVARSSGGGG) is disordered. Residues 46–62 (CLSLLSLGTCLGLAWFV) form a helical membrane-spanning segment. N-linked (GlcNAc...) asparagine glycosylation is present at asparagine 144. Positions 184–217 (GLVTDVISLTDSVQELENKIEKVEKNTVKNIGDL) form a coiled coil. The N-linked (GlcNAc...) asparagine glycan is linked to asparagine 328.

In terms of processing, N-glycosylated. Isoform 4 is glycosylated at Asn-154. In terms of tissue distribution, expressed in vein endothelial cells. Isoform 4 is expressed in lung, kidney, spleen, thymus and skeletal muscle.

It localises to the endoplasmic reticulum membrane. Its function is as follows. Target of p53/TP53 with pro-apoptotic function. This is Inhibitor of nuclear factor kappa-B kinase-interacting protein (IKBIP) from Homo sapiens (Human).